The sequence spans 270 residues: L-fucose dehydrogenase (270 aa).

Arg-19, Ile-21, Asp-40, Lys-41, Asp-62, Val-63, Asn-89, Tyr-154, Lys-158, Ile-187, Thr-189, and Leu-191 together coordinate NAD(+). The Proton acceptor role is filled by Tyr-154.

This sequence belongs to the short-chain dehydrogenases/reductases (SDR) family. As to quaternary structure, homotetramer. In terms of tissue distribution, detected in retina.

The protein localises to the cytoplasm. It carries out the reaction L-fucose + NAD(+) = L-fucono-1,5-lactone + NADH + H(+). It catalyses the reaction D-arabinose + NAD(+) = D-arabinono-1,5-lactone + NADH + H(+). The catalysed reaction is L-galactose + NAD(+) = L-galactono-1,5-lactone + NADH + H(+). It functions in the pathway carbohydrate degradation; L-fucose degradation. Its function is as follows. Catalyzes the NAD(+)-dependent oxidation of L-fucose, yielding L-fucono-1,5-lactone, which rapidly converts spontaneously to L-fucone-1,4-lactone. Can also act on D-arabinose and L-galactose, with lower catalytic efficiency. Does not use NADPH. May be the initial enzyme of the putative L-fucose degradation pathway in mammals. The chain is L-fucose dehydrogenase (HSD17B14) from Bos taurus (Bovine).